Here is a 647-residue protein sequence, read N- to C-terminus: Macrolide export ATP-binding/permease protein MacB (647 aa).

The 239-residue stretch at 7-245 (IRLEDICKTF…EATLQPHEEI (239 aa)) folds into the ABC transporter domain. 43–50 (GASGSGKS) is an ATP binding site. Transmembrane regions (helical) follow at residues 274–294 (VLTLLGIIIGVSSVVTMLAIG), 529–549 (VAAISLLVGGIGVMNIMLVSV), 573–593 (FIIEALSVSAIGGAIGVILGL), and 610–630 (FGPVLLAFACAFATGLIFGFL).

This sequence belongs to the ABC transporter superfamily. Macrolide exporter (TC 3.A.1.122) family. Homodimer.

The protein resides in the cell inner membrane. Functionally, non-canonical ABC transporter that contains transmembrane domains (TMD), which form a pore in the inner membrane, and an ATP-binding domain (NBD), which is responsible for energy generation. Confers resistance against macrolides. This chain is Macrolide export ATP-binding/permease protein MacB, found in Brucella melitensis biotype 1 (strain ATCC 23456 / CCUG 17765 / NCTC 10094 / 16M).